We begin with the raw amino-acid sequence, 379 residues long: Succinyl-diaminopimelate desuccinylase (379 aa).

His70 contacts Zn(2+). Residue Asp72 is part of the active site. Asp103 provides a ligand contact to Zn(2+). Glu137 (proton acceptor) is an active-site residue. Zn(2+)-binding residues include Glu138, Glu166, and His352.

This sequence belongs to the peptidase M20A family. DapE subfamily. As to quaternary structure, homodimer. Requires Zn(2+) as cofactor. The cofactor is Co(2+).

It carries out the reaction N-succinyl-(2S,6S)-2,6-diaminopimelate + H2O = (2S,6S)-2,6-diaminopimelate + succinate. The protein operates within amino-acid biosynthesis; L-lysine biosynthesis via DAP pathway; LL-2,6-diaminopimelate from (S)-tetrahydrodipicolinate (succinylase route): step 3/3. Its function is as follows. Catalyzes the hydrolysis of N-succinyl-L,L-diaminopimelic acid (SDAP), forming succinate and LL-2,6-diaminopimelate (DAP), an intermediate involved in the bacterial biosynthesis of lysine and meso-diaminopimelic acid, an essential component of bacterial cell walls. This Shewanella putrefaciens (strain CN-32 / ATCC BAA-453) protein is Succinyl-diaminopimelate desuccinylase.